The primary structure comprises 350 residues: Spermidine/putrescine import ATP-binding protein PotA (350 aa).

The ABC transporter domain occupies 6–236 (LELRNISKQY…PENLWTAQFI (231 aa)). Residue 38–45 (GPSGCGKT) participates in ATP binding.

Belongs to the ABC transporter superfamily. Spermidine/putrescine importer (TC 3.A.1.11.1) family. As to quaternary structure, the complex is composed of two ATP-binding proteins (PotA), two transmembrane proteins (PotB and PotC) and a solute-binding protein (PotD).

It localises to the cell membrane. The catalysed reaction is ATP + H2O + polyamine-[polyamine-binding protein]Side 1 = ADP + phosphate + polyamineSide 2 + [polyamine-binding protein]Side 1.. Its function is as follows. Part of the ABC transporter complex PotABCD involved in spermidine/putrescine import. Responsible for energy coupling to the transport system. This is Spermidine/putrescine import ATP-binding protein PotA from Spiroplasma citri.